The sequence spans 145 residues: Procyclic form-specific polypeptide B-alpha (145 aa).

The N-terminal stretch at 1–27 (MAPRSLYLLAVLLFSANLFAGVGFAAA) is a signal peptide. Positions 28–127 (AEGPEDKGLT…PEPEPGAATL (100 aa)) are disordered. The segment covering 31–52 (PEDKGLTKGGKGKGEKGTKVGA) has biased composition (basic and acidic residues). 32 repeat units span residues 59-60 (DP), 61-62 (DP), 63-64 (EP), 65-66 (EP), 67-68 (EP), 69-70 (EP), 71-72 (EP), 73-74 (EP), 75-76 (EP), 77-78 (EP), 79-80 (EP), 81-82 (EP), 83-84 (EP), 85-86 (EP), 87-88 (EP), 89-90 (EP), 91-92 (EP), 93-94 (EP), 95-96 (EP), 97-98 (EP), 99-100 (EP), 101-102 (EP), 103-104 (EP), 105-106 (EP), 107-108 (EP), 109-110 (EP), 111-112 (EP), 113-114 (EP), 115-116 (EP), 117-118 (EP), 119-120 (EP), and 121-122 (EP). The 32 X 2 AA tandem repeats of [DE]-P stretch occupies residues 59–122 (DPDPEPEPEP…EPEPEPEPEP (64 aa)). Positions 60–120 (PDPEPEPEPE…EPEPEPEPEP (61 aa)) are enriched in acidic residues. Residue Gly123 is the site of GPI-anchor amidated glycine attachment. Residues 124-145 (AATLKSVALPFAIAAAALVAAF) constitute a propeptide that is removed on maturation.

The protein localises to the cell membrane. Functionally, major surface antigen of procyclic forms. In Trypanosoma brucei brucei, this protein is Procyclic form-specific polypeptide B-alpha (PARPB).